We begin with the raw amino-acid sequence, 220 residues long: Fructose-6-phosphate aldolase 2 (220 aa).

K85 acts as the Schiff-base intermediate with substrate in catalysis.

Belongs to the transaldolase family. Type 3A subfamily. In terms of assembly, homodecamer.

Its subcellular location is the cytoplasm. The catalysed reaction is beta-D-fructose 6-phosphate = dihydroxyacetone + D-glyceraldehyde 3-phosphate. Catalyzes the reversible formation of fructose 6-phosphate from dihydroxyacetone and D-glyceraldehyde 3-phosphate via an aldolization reaction. Can utilize hydroxyacetone as an alternative donor substrate. Is also able to catalyze the direct self-aldol addition of glycolaldehyde. Is less catalytically efficient than the isozyme FsaA. Does not display transaldolase activity. In Escherichia coli (strain K12), this protein is Fructose-6-phosphate aldolase 2 (fsaB).